Consider the following 443-residue polypeptide: Thymidine phosphorylase (443 aa).

It belongs to the thymidine/pyrimidine-nucleoside phosphorylase family. As to quaternary structure, homodimer.

The catalysed reaction is thymidine + phosphate = 2-deoxy-alpha-D-ribose 1-phosphate + thymine. Its pathway is pyrimidine metabolism; dTMP biosynthesis via salvage pathway; dTMP from thymine: step 1/2. The enzymes which catalyze the reversible phosphorolysis of pyrimidine nucleosides are involved in the degradation of these compounds and in their utilization as carbon and energy sources, or in the rescue of pyrimidine bases for nucleotide synthesis. The sequence is that of Thymidine phosphorylase from Shewanella oneidensis (strain ATCC 700550 / JCM 31522 / CIP 106686 / LMG 19005 / NCIMB 14063 / MR-1).